We begin with the raw amino-acid sequence, 154 residues long: NADPH-dependent 7-cyano-7-deazaguanine reductase (154 aa).

Over residues 1–11 (MAKKPVKDLKQ) the composition is skewed to basic and acidic residues. The disordered stretch occupies residues 1–31 (MAKKPVKDLKQLGHATPVPASPEEATLERVP). Catalysis depends on Cys52, which acts as the Thioimide intermediate. Asp59 serves as the catalytic Proton donor. Residues 74 to 76 (IES) and 93 to 94 (HE) each bind substrate.

Belongs to the GTP cyclohydrolase I family. QueF type 1 subfamily.

It is found in the cytoplasm. It catalyses the reaction 7-aminomethyl-7-carbaguanine + 2 NADP(+) = 7-cyano-7-deazaguanine + 2 NADPH + 3 H(+). The protein operates within tRNA modification; tRNA-queuosine biosynthesis. Its function is as follows. Catalyzes the NADPH-dependent reduction of 7-cyano-7-deazaguanine (preQ0) to 7-aminomethyl-7-deazaguanine (preQ1). The sequence is that of NADPH-dependent 7-cyano-7-deazaguanine reductase from Parvibaculum lavamentivorans (strain DS-1 / DSM 13023 / NCIMB 13966).